The chain runs to 225 residues: Imidazole glycerol phosphate synthase subunit HisH (225 aa).

The Glutamine amidotransferase type-1 domain occupies 3–225; the sequence is TIAIVDYGMG…LYRNFVDWQP (223 aa). Residue C82 is the Nucleophile of the active site. Catalysis depends on residues H205 and E207.

Heterodimer of HisH and HisF.

The protein resides in the cytoplasm. It catalyses the reaction 5-[(5-phospho-1-deoxy-D-ribulos-1-ylimino)methylamino]-1-(5-phospho-beta-D-ribosyl)imidazole-4-carboxamide + L-glutamine = D-erythro-1-(imidazol-4-yl)glycerol 3-phosphate + 5-amino-1-(5-phospho-beta-D-ribosyl)imidazole-4-carboxamide + L-glutamate + H(+). The catalysed reaction is L-glutamine + H2O = L-glutamate + NH4(+). Its pathway is amino-acid biosynthesis; L-histidine biosynthesis; L-histidine from 5-phospho-alpha-D-ribose 1-diphosphate: step 5/9. In terms of biological role, IGPS catalyzes the conversion of PRFAR and glutamine to IGP, AICAR and glutamate. The HisH subunit catalyzes the hydrolysis of glutamine to glutamate and ammonia as part of the synthesis of IGP and AICAR. The resulting ammonia molecule is channeled to the active site of HisF. The protein is Imidazole glycerol phosphate synthase subunit HisH of Bordetella pertussis (strain Tohama I / ATCC BAA-589 / NCTC 13251).